Consider the following 371-residue polypeptide: 2-oxoadipate dioxygenase/decarboxylase, chloroplastic (371 aa).

The N-terminal 50 residues, 1–50, are a transit peptide targeting the chloroplast; the sequence is MISLHSSAIKASLYGSFPSSLRSTLSVSFSAGSLIRLPSVGKRNLSVVVS. Residues H113 and R117 each coordinate 2-oxoadipate. H113 is a Fe(2+) binding site. H250 is a Fe(2+) binding site. Positions 296 and 320 each coordinate 2-oxoadipate. E322 serves as a coordination point for Fe(2+).

It belongs to the 2-oxoadipate dioxygenase/decarboxylase family. It depends on Fe(2+) as a cofactor.

It localises to the plastid. Its subcellular location is the chloroplast. It carries out the reaction 2-oxoadipate + O2 = (R)-2-hydroxyglutarate + CO2. The protein operates within amino-acid degradation. Its function is as follows. Catalyzes the decarboxylation and hydroxylation of 2-oxoadipate (2OA) to form D-2-hydroxyglutarate (D-2-HGA). Is involved in a D-lysine catabolic pathway. The protein is 2-oxoadipate dioxygenase/decarboxylase, chloroplastic of Arabidopsis thaliana (Mouse-ear cress).